A 413-amino-acid polypeptide reads, in one-letter code: MQKRVVILLLDSFGIGASEDAKDFGDLGANTLGNIAKACFNNLADSNDRKGALKLPYLESLGLGLSALKATNELPLGFESKPNLIGAYAYAKELSSAKDTISGHWEMMGAPVLFEWGYFKDKNNSFPKEILDEIMRKTKIKGYLGNCHASGTEIIKDLGEKHLETLYPIFYTSADSVFQIAVHEEKFGLDNLYALCEEAFQILEPLKIARVIARPFIGANREDFKRTANRKDYAIKPHKKLLFETFIEEKQGEVISIGKIADIYAHVGITQKFKAGSLMELCDVTLEQIKNAKNNSLIFTNFVHFDSDYGHRRDISGYANALEYFDARLKEILDNLKENDLLILCADHGCDPSFKGTDHTREYIPVLFYHKDLQPAFLGKSESFADIGQSIAYFLGLSPLDYGKNLLNFKGQP.

Residues Asp-11, Asp-306, His-311, Asp-347, His-348, and His-359 each contribute to the Mn(2+) site.

This sequence belongs to the phosphopentomutase family. The cofactor is Mn(2+).

It localises to the cytoplasm. The enzyme catalyses 2-deoxy-alpha-D-ribose 1-phosphate = 2-deoxy-D-ribose 5-phosphate. It catalyses the reaction alpha-D-ribose 1-phosphate = D-ribose 5-phosphate. It functions in the pathway carbohydrate degradation; 2-deoxy-D-ribose 1-phosphate degradation; D-glyceraldehyde 3-phosphate and acetaldehyde from 2-deoxy-alpha-D-ribose 1-phosphate: step 1/2. Its function is as follows. Isomerase that catalyzes the conversion of deoxy-ribose 1-phosphate (dRib-1-P) and ribose 1-phosphate (Rib-1-P) to deoxy-ribose 5-phosphate (dRib-5-P) and ribose 5-phosphate (Rib-5-P), respectively. This is Phosphopentomutase from Helicobacter pylori (strain HPAG1).